Here is a 227-residue protein sequence, read N- to C-terminus: Cytidylate kinase (227 aa).

12-20 (GPSGAGKGT) provides a ligand contact to ATP.

This sequence belongs to the cytidylate kinase family. Type 1 subfamily.

The protein resides in the cytoplasm. The catalysed reaction is CMP + ATP = CDP + ADP. The enzyme catalyses dCMP + ATP = dCDP + ADP. This Shigella boydii serotype 18 (strain CDC 3083-94 / BS512) protein is Cytidylate kinase.